The following is a 522-amino-acid chain: Peptide chain release factor 3 (522 aa).

One can recognise a tr-type G domain in the interval 10–277 (ASRKTFAIIS…TFVDFAPAPS (268 aa)). Residues 19–26 (SHPDAGKT), 87–91 (DTPGH), and 141–144 (NKMD) each bind GTP.

It belongs to the TRAFAC class translation factor GTPase superfamily. Classic translation factor GTPase family. PrfC subfamily.

The protein resides in the cytoplasm. In terms of biological role, increases the formation of ribosomal termination complexes and stimulates activities of RF-1 and RF-2. It binds guanine nucleotides and has strong preference for UGA stop codons. It may interact directly with the ribosome. The stimulation of RF-1 and RF-2 is significantly reduced by GTP and GDP, but not by GMP. This is Peptide chain release factor 3 from Listeria welshimeri serovar 6b (strain ATCC 35897 / DSM 20650 / CCUG 15529 / CIP 8149 / NCTC 11857 / SLCC 5334 / V8).